The chain runs to 92 residues: Putative septation protein SpoVG (92 aa).

The protein belongs to the SpoVG family.

Functionally, could be involved in septation. This is Putative septation protein SpoVG from Thermoanaerobacter pseudethanolicus (strain ATCC 33223 / 39E) (Clostridium thermohydrosulfuricum).